Reading from the N-terminus, the 461-residue chain is tRNA modification GTPase MnmE (461 aa).

Residues arginine 22, glutamate 87, and arginine 126 each coordinate (6S)-5-formyl-5,6,7,8-tetrahydrofolate. One can recognise a TrmE-type G domain in the interval glycine 223–phenylalanine 382. A K(+)-binding site is contributed by asparagine 233. GTP is bound by residues asparagine 233 to serine 238, threonine 252 to threonine 258, and aspartate 277 to glycine 280. A Mg(2+)-binding site is contributed by serine 237. Residues threonine 252, isoleucine 254, and threonine 257 each contribute to the K(+) site. A Mg(2+)-binding site is contributed by threonine 258. Residue lysine 461 participates in (6S)-5-formyl-5,6,7,8-tetrahydrofolate binding.

The protein belongs to the TRAFAC class TrmE-Era-EngA-EngB-Septin-like GTPase superfamily. TrmE GTPase family. Homodimer. Heterotetramer of two MnmE and two MnmG subunits. K(+) serves as cofactor.

It localises to the cytoplasm. Its function is as follows. Exhibits a very high intrinsic GTPase hydrolysis rate. Involved in the addition of a carboxymethylaminomethyl (cmnm) group at the wobble position (U34) of certain tRNAs, forming tRNA-cmnm(5)s(2)U34. The chain is tRNA modification GTPase MnmE from Lysinibacillus sphaericus (strain C3-41).